The chain runs to 161 residues: uncharacterized protein (161 aa).

This sequence belongs to the sapovirus VP3 family.

This is an uncharacterized protein from Sapporo virus (strain Human/United Kingdom/Manchester/1993) (Hu/SV/Man/1993/UK).